We begin with the raw amino-acid sequence, 551 residues long: Dihydroxy-acid dehydratase (551 aa).

Cysteine 52 provides a ligand contact to [2Fe-2S] cluster. Mg(2+) is bound at residue aspartate 84. Cysteine 125 is a binding site for [2Fe-2S] cluster. Mg(2+) contacts are provided by aspartate 126 and lysine 127. Lysine 127 carries the post-translational modification N6-carboxylysine. Residue cysteine 197 participates in [2Fe-2S] cluster binding. Glutamate 448 contacts Mg(2+). Serine 474 (proton acceptor) is an active-site residue.

This sequence belongs to the IlvD/Edd family. In terms of assembly, homodimer. The cofactor is [2Fe-2S] cluster. Requires Mg(2+) as cofactor.

The enzyme catalyses (2R)-2,3-dihydroxy-3-methylbutanoate = 3-methyl-2-oxobutanoate + H2O. It carries out the reaction (2R,3R)-2,3-dihydroxy-3-methylpentanoate = (S)-3-methyl-2-oxopentanoate + H2O. Its pathway is amino-acid biosynthesis; L-isoleucine biosynthesis; L-isoleucine from 2-oxobutanoate: step 3/4. It functions in the pathway amino-acid biosynthesis; L-valine biosynthesis; L-valine from pyruvate: step 3/4. Its function is as follows. Functions in the biosynthesis of branched-chain amino acids. Catalyzes the dehydration of (2R,3R)-2,3-dihydroxy-3-methylpentanoate (2,3-dihydroxy-3-methylvalerate) into 2-oxo-3-methylpentanoate (2-oxo-3-methylvalerate) and of (2R)-2,3-dihydroxy-3-methylbutanoate (2,3-dihydroxyisovalerate) into 2-oxo-3-methylbutanoate (2-oxoisovalerate), the penultimate precursor to L-isoleucine and L-valine, respectively. The polypeptide is Dihydroxy-acid dehydratase (Francisella tularensis subsp. tularensis (strain FSC 198)).